Here is a 154-residue protein sequence, read N- to C-terminus: Myoglobin (154 aa).

In terms of domain architecture, Globin spans 2-148 (GLSEGEWQLV…FRKDIAAKYK (147 aa)). Serine 4 carries the phosphoserine modification. Histidine 65 serves as a coordination point for nitrite. Residue histidine 65 participates in O2 binding. At threonine 68 the chain carries Phosphothreonine. Histidine 94 is a binding site for heme b.

As to quaternary structure, monomer.

The protein localises to the cytoplasm. Its subcellular location is the sarcoplasm. It catalyses the reaction Fe(III)-heme b-[protein] + nitric oxide + H2O = Fe(II)-heme b-[protein] + nitrite + 2 H(+). The enzyme catalyses H2O2 + AH2 = A + 2 H2O. Functionally, monomeric heme protein which primary function is to store oxygen and facilitate its diffusion within muscle tissues. Reversibly binds oxygen through a pentacoordinated heme iron and enables its timely and efficient release as needed during periods of heightened demand. Depending on the oxidative conditions of tissues and cells, and in addition to its ability to bind oxygen, it also has a nitrite reductase activity whereby it regulates the production of bioactive nitric oxide. Under stress conditions, like hypoxia and anoxia, it also protects cells against reactive oxygen species thanks to its pseudoperoxidase activity. This Delphinapterus leucas (Beluga whale) protein is Myoglobin (MB).